A 278-amino-acid polypeptide reads, in one-letter code: Probable endonuclease 4 (278 aa).

Residues H66, H106, E140, D172, H175, H209, D222, H224, and E254 each contribute to the Zn(2+) site.

Belongs to the AP endonuclease 2 family. It depends on Zn(2+) as a cofactor.

The enzyme catalyses Endonucleolytic cleavage to 5'-phosphooligonucleotide end-products.. Endonuclease IV plays a role in DNA repair. It cleaves phosphodiester bonds at apurinic or apyrimidinic (AP) sites, generating a 3'-hydroxyl group and a 5'-terminal sugar phosphate. The sequence is that of Probable endonuclease 4 from Haloquadratum walsbyi (strain DSM 16790 / HBSQ001).